The following is a 221-amino-acid chain: MRYNNYDNSGSSFLTRVVKKSDMEKTLLLNREIDDWKSNDKKKAYKERGRVYASCSFIEVSFSQIRAVDVEKKIENAEQLRDLTRNIVKNKTSSLNEITPSKNRVTSACNSERRTTSQEANNLEGYHSCAQGTSRSASITKKYSKKTTSRPKREKRQTILPNGEIKECSKCKDTWTIQWRSGPDQNRELCSPCGLAYGKRLKKENEKKRQAADKRIDRNNP.

Residues 101–110 (SKNRVTSACN) are compositionally biased toward polar residues. 2 disordered regions span residues 101 to 121 (SKNR…QEAN) and 137 to 161 (ASIT…TILP). A compositionally biased stretch (basic residues) spans 142 to 155 (KYSKKTTSRPKREK). The GATA-type zinc-finger motif lies at 168–193 (CSKCKDTWTIQWRSGPDQNRELCSPC). The segment at 201 to 221 (LKKENEKKRQAADKRIDRNNP) is disordered. Over residues 203 to 221 (KENEKKRQAADKRIDRNNP) the composition is skewed to basic and acidic residues.

It is found in the cytoplasm. The protein localises to the nucleus. Its function is as follows. Plays a direct or indirect role in pre-rRNA processing. This chain is Pre-rRNA-processing protein SRD1 (SRD1), found in Saccharomyces cerevisiae (strain ATCC 204508 / S288c) (Baker's yeast).